Here is an 80-residue protein sequence, read N- to C-terminus: Exodeoxyribonuclease 7 small subunit (80 aa).

This sequence belongs to the XseB family. As to quaternary structure, heterooligomer composed of large and small subunits.

It is found in the cytoplasm. The catalysed reaction is Exonucleolytic cleavage in either 5'- to 3'- or 3'- to 5'-direction to yield nucleoside 5'-phosphates.. Functionally, bidirectionally degrades single-stranded DNA into large acid-insoluble oligonucleotides, which are then degraded further into small acid-soluble oligonucleotides. This Vibrio atlanticus (strain LGP32) (Vibrio splendidus (strain Mel32)) protein is Exodeoxyribonuclease 7 small subunit.